A 217-amino-acid polypeptide reads, in one-letter code: Cytidylate kinase (217 aa).

Residue 10–18 (GPAGAGKST) participates in ATP binding.

Belongs to the cytidylate kinase family. Type 1 subfamily.

The protein localises to the cytoplasm. It catalyses the reaction CMP + ATP = CDP + ADP. It carries out the reaction dCMP + ATP = dCDP + ADP. This chain is Cytidylate kinase, found in Clostridium botulinum (strain Langeland / NCTC 10281 / Type F).